A 514-amino-acid chain; its full sequence is 1-pyrroline-5-carboxylate dehydrogenase (514 aa).

Catalysis depends on residues E286 and C320.

It belongs to the aldehyde dehydrogenase family. RocA subfamily.

It carries out the reaction L-glutamate 5-semialdehyde + NAD(+) + H2O = L-glutamate + NADH + 2 H(+). It functions in the pathway amino-acid degradation; L-proline degradation into L-glutamate; L-glutamate from L-proline: step 2/2. The polypeptide is 1-pyrroline-5-carboxylate dehydrogenase (Staphylococcus epidermidis (strain ATCC 12228 / FDA PCI 1200)).